A 317-amino-acid chain; its full sequence is Melanocyte-stimulating hormone receptor (317 aa).

Residues 1 to 37 (MPVQGSLRSLVGAVNSTPTASPHLRPATNQTEPQCLE) lie on the Extracellular side of the membrane. N-linked (GlcNAc...) asparagine glycosylation is present at asparagine 29. Residues 38-63 (VSVPVGLFLCLGLVSLVENTLVVAVI) traverse the membrane as a helical segment. Over 64–72 (AKNRNLHSP) the chain is Cytoplasmic. The chain crosses the membrane as a helical span at residues 73-93 (MYCFICCLALSDLLVSVSNVL). At 94–118 (KTAVLLLLEAGALAAQATVVQQLGN) the chain is on the extracellular side. Residues 119 to 140 (VINMLICSSMVSSLCFLGAIAM) traverse the membrane as a helical segment. Topologically, residues 141-163 (DRYISIFYALRYHSIVTLARARR) are cytoplasmic. Residues 164–183 (AIAAVWVASILSSILFFTYY) traverse the membrane as a helical segment. Residues 184–191 (DRTAALLC) are Extracellular-facing. A helical membrane pass occupies residues 192–211 (LVVFFLAMLVLMAVLYVHML). Residues 212–240 (TQACQHAQGIARLHKRQHPVQQGWGLKGA) lie on the Cytoplasmic side of the membrane. The chain crosses the membrane as a helical span at residues 241–266 (ATLAVLLGVFFLCWGPLFLHLTLIAV). Residues 267–279 (CPQHPTCNCIVKN) lie on the Extracellular side of the membrane. A helical transmembrane segment spans residues 280-300 (FKLFLALIICNAIVDPLIYAF). Over 301–317 (RSQELRKTLKEVLLFSW) the chain is Cytoplasmic.

It belongs to the G-protein coupled receptor 1 family. Interacts with MGRN1, but does not undergo MGRN1-mediated ubiquitination; this interaction competes with GNAS-binding and thus inhibits agonist-induced cAMP production. Interacts with OPN3; the interaction results in a decrease in MC1R-mediated cAMP signaling and ultimately a decrease in melanin production in melanocytes.

The protein resides in the cell membrane. Its function is as follows. Receptor for MSH (alpha, beta and gamma) and ACTH. The activity of this receptor is mediated by G proteins which activate adenylate cyclase. Mediates melanogenesis, the production of eumelanin (black/brown) and phaeomelanin (red/yellow), via regulation of cAMP signaling in melanocytes. The polypeptide is Melanocyte-stimulating hormone receptor (MC1R) (Varecia rubra (Red ruffed lemur)).